Reading from the N-terminus, the 549-residue chain is Limonene dehydrogenase subunit B (549 aa).

Belongs to the carotenoid/retinoid oxidoreductase family. Heterodimer composed of CtmA and CtmB. FAD serves as cofactor.

Its subcellular location is the cytoplasm. It carries out the reaction (4S)-limonene + A + H2O = (4S)-perillyl alcohol + AH2. The catalysed reaction is (4R)-limonene + A + H2O = (4R)-perillyl alcohol + AH2. It participates in terpene metabolism; monoterpene degradation. The presence of molecular oxygen causes a 40% reduction in specific activity. Involved in the degradation of the cyclic monoterpene limonene. Catalyzes the oxidation of limonene at the primary methyl group, forming perillyl alcohol. Hydroxylates the R- and S-enantiomers to their respective enantiomeric form of perillyl alcohol at a similar rate. Native CtmAB oxidizes a wide range of monocyclic monoterpenes containing the allylic methyl group motif (1-methyl-cyclohex-1-ene). Can also catalyze the reverse reaction, the reduction of perillyl alcohol to limonene, but with lower efficiency. Cannot use molecular oxygen as an electron acceptor. The natural electron acceptor is likely a heterodimeric electron transfer flavoprotein (ETF). The polypeptide is Limonene dehydrogenase subunit B (Castellaniella defragrans (strain DSM 12143 / CCUG 39792 / 65Phen) (Alcaligenes defragrans)).